A 1080-amino-acid polypeptide reads, in one-letter code: Adenylate cyclase type 7 (1080 aa).

Residues 1 to 33 are Cytoplasmic-facing; sequence MPAKGRYFLNEGEEGPDQDALYEKYQLTSQHGP. 6 consecutive transmembrane segments (helical) span residues 34 to 54, 63 to 83, 95 to 117, 122 to 142, 147 to 167, and 176 to 196; these read LLLT…IIAF, QAIL…SVLM, ALAL…DAWT, AWEQ…LLPF, AVAV…SLMG, and VGLQ…TGAF. Residues 197-594 are Cytoplasmic-facing; that stretch reads HKHQMQDASR…YRLAPIPRAR (398 aa). Residues 279–406 form the Guanylate cyclase 1 domain; that stretch reads SILYADIVGF…HDVSLANRME (128 aa). Residues aspartate 284, isoleucine 285, and aspartate 328 each contribute to the Mg(2+) site. ATP-binding positions include 284–289, 326–328, and arginine 372; these read DIVGFT and LGD. The interval 454 to 474 is disordered; that stretch reads DPRSQQPPPPSQHLPRPKGDA. Positions 477-482 are mediates regulation of adenylate cyclase activity by C5 alpha-induced G- beta and gamma pathway; sequence KMRASV. Residues 491–499 are mediates regulation of adenylate cyclase activity by sphingosine 1-phosphate-induced G alpha 13 pathway; it reads WGAARPFAH. The segment at 504–546 is disordered; it reads ESVSSGETHVPNGRRPKSVPQRHRRTPDRSMSPKGRSEDDSYD. A modulates adenylate cyclase activity by modulating the binding of G(s)alpha to the high-affinity G(s)alpha binding site in 7C1a/7C2 region spans residues 506-584; it reads VSSGETHVPN…IFLEKGFERE (79 aa). Residues 515–529 are compositionally biased toward basic residues; the sequence is NGRRPKSVPQRHRRT. 3 helical membrane-spanning segments follow: residues 595 to 615, 620 to 640, and 669 to 688; these read HDFA…VLLM, ALGV…GLCF, and LTLA…INLP. Asparagine 701 is a glycosylation site (N-linked (GlcNAc...) asparagine). 2 consecutive transmembrane segments (helical) span residues 718–737 and 746–773; these read PLPY…SVFL and VLLT…CGQG. N-linked (GlcNAc...) asparagine glycosylation is found at asparagine 776 and asparagine 781. A helical membrane pass occupies residues 794 to 814; sequence DLKTMTNFYLVLFYITLLTLS. The Cytoplasmic segment spans residues 815–1080; that stretch reads RQIDYYCRLD…TAKFQGLGLN (266 aa). The region spanning 879–1023 is the Guanylate cyclase 2 domain; it reads CVMFASVPDF…NTVNVASRME (145 aa). ATP is bound by residues lysine 931, 1010 to 1012, 1017 to 1021, and lysine 1057; these read DIW and NVASR.

It belongs to the adenylyl cyclase class-4/guanylyl cyclase family. Mg(2+) is required as a cofactor. The cofactor is Mn(2+). Phosphorylated by PRKCD.

The protein localises to the membrane. It carries out the reaction ATP = 3',5'-cyclic AMP + diphosphate. With respect to regulation, activated by the G protein alpha subunit. Activated by the G protein beta and gamma subunit complex. Activated by GNA13 and GNA12. Ethanol and phorbol 12,13-dibutanoate significantly potentiate adenylate cyclase activity generated in response to the activation of the prostanoid receptor by the agonist prostaglandin E1(1-) in a PKC-dependent manner. Inhibited by lithium. In terms of biological role, catalyzes the formation of cAMP in response to activation of G protein-coupled receptors. Functions in signaling cascades activated namely by thrombin and sphingosine 1-phosphate and mediates regulation of cAMP synthesis through synergistic action of the stimulatory G alpha protein with GNA13. Also, during inflammation, mediates zymosan-induced increase intracellular cAMP, leading to protein kinase A pathway activation in order to modulate innate immune responses through heterotrimeric G proteins G(12/13). Functions in signaling cascades activated namely by dopamine and C5 alpha chain and mediates regulation of cAMP synthesis through synergistic action of the stimulatory G protein with G beta:gamma complex. Functions, through cAMP response regulation, to keep inflammation under control during bacterial infection by sensing the presence of serum factors, such as the bioactive lysophospholipid (LPA) that regulate LPS-induced TNF-alpha production. However, it is also required for the optimal functions of B and T cells during adaptive immune responses by regulating cAMP synthesis in both B and T cells. This is Adenylate cyclase type 7 from Homo sapiens (Human).